Reading from the N-terminus, the 1307-residue chain is Contactin-associated protein like 5-3 (1307 aa).

The signal sequence occupies residues 1–24 (MDFVPRLNSVLTLVLSGLWHFGLT). Residues 25 to 1238 (ATNCDNCDDP…PLTNAVLSDS (1214 aa)) are Extracellular-facing. The region spanning 31 to 175 (CDDPLASFLS…IGMRMEVYGC (145 aa)) is the F5/8 type C domain. Cys31 and Cys175 form a disulfide bridge. Laminin G-like domains follow at residues 181–361 (VADF…TFSC) and 368–545 (PITF…IDLC). A glycan (N-linked (GlcNAc...) asparagine) is linked at Asn283. Cys330 and Cys361 are joined by a disulfide. N-linked (GlcNAc...) asparagine glycosylation is present at Asn497. 4 cysteine pairs are disulfide-bonded: Cys513–Cys545, Cys551–Cys562, Cys556–Cys571, and Cys573–Cys583. In terms of domain architecture, EGF-like 1 spans 547 to 584 (IKDRCLPNYCEHGGHCVQTWTTFYCNCSNTGYTGATCH). In terms of domain architecture, Fibrinogen C-terminal spans 585-792 (DSIYEQSCEV…LRCYGDRHFW (208 aa)). N-linked (GlcNAc...) asparagine glycosylation is found at Asn600, Asn624, and Asn637. One can recognise a Laminin G-like 3 domain in the interval 793 to 958 (NAVSFSTEAS…MVTSGVRPGC (166 aa)). 5 disulfide bridges follow: Cys931/Cys958, Cys962/Cys975, Cys969/Cys984, Cys986/Cys996, and Cys1165/Cys1200. Positions 959-997 (PGHCSSYGNNCHNGGKCVEKHNSYSCDCTKSPYEGPFCQ) constitute an EGF-like 2 domain. Positions 1019–1200 (PVSKNTSTSS…VQGSLREFSC (182 aa)) constitute a Laminin G-like 4 domain. Residues 1239–1259 (AVIGGVIAVVTFITFCVIGIM) traverse the membrane as a helical segment. Residues 1260–1307 (TRFLYQHKQSHCTSQKKEKEYSENLDSSFRHDIDLQSTTSKCKREYFI) are Cytoplasmic-facing.

It belongs to the neurexin family.

The protein resides in the membrane. Its function is as follows. May play a role in the correct development and proper functioning of the peripheral and central nervous system and be involved in cell adhesion and intercellular communication. The sequence is that of Contactin-associated protein like 5-3 (Cntnap5c) from Rattus norvegicus (Rat).